The following is a 252-amino-acid chain: Probable endonuclease 4 (252 aa).

Zn(2+) is bound by residues H56, H96, E129, D162, H165, H191, D204, H206, and E233.

This sequence belongs to the AP endonuclease 2 family. Zn(2+) serves as cofactor.

The catalysed reaction is Endonucleolytic cleavage to 5'-phosphooligonucleotide end-products.. Its function is as follows. Endonuclease IV plays a role in DNA repair. It cleaves phosphodiester bonds at apurinic or apyrimidinic (AP) sites, generating a 3'-hydroxyl group and a 5'-terminal sugar phosphate. The sequence is that of Probable endonuclease 4 from Mycobacterium leprae (strain Br4923).